We begin with the raw amino-acid sequence, 122 residues long: Structural protein p14.5 (122 aa).

Disordered stretches follow at residues 1 to 27 (MADFNSPIQYLKEDSRDRTSIGSLEYD) and 73 to 122 (EDNN…HKSK). A2 is modified (N-acetylalanine; by host). Over residues 105-122 (KPKKKKHLFPKLSSHKSK) the composition is skewed to basic residues.

The protein belongs to the asfivirus structural protein p14.5 family. Interacts with the major capsid protein. Interacts with host IRF3; this interaction interferes with the recruitment of IRF3 to TBK1. In terms of processing, acetylated.

It localises to the virion. Structural protein required for transport of intracellular particles from the assembly sites to the plasma membrane. Binds to both ssDNA and dsDNA. Suppressed the activation of the cGAS/STING pathway by interfering with the recruitment of IRF3 to TBK1, which in turn suppresses IRF3 phosphorylation, decreasing interferon production. This African swine fever virus (isolate Warthog/Namibia/Wart80/1980) (ASFV) protein is Structural protein p14.5.